The following is a 375-amino-acid chain: tRNA-specific 2-thiouridylase MnmA 3 (375 aa).

Residues 11–18 and Met37 each bind ATP; that span reads GMSGGIDS. Cys104 (nucleophile) is an active-site residue. Cys104 and Cys201 are oxidised to a cystine. Gly128 is a binding site for ATP. Residues 150-152 are interaction with tRNA; the sequence is KDQ. The active-site Cysteine persulfide intermediate is the Cys201. An interaction with tRNA region spans residues 309 to 310; it reads RY.

It belongs to the MnmA/TRMU family.

The protein resides in the cytoplasm. The catalysed reaction is S-sulfanyl-L-cysteinyl-[protein] + uridine(34) in tRNA + AH2 + ATP = 2-thiouridine(34) in tRNA + L-cysteinyl-[protein] + A + AMP + diphosphate + H(+). Catalyzes the 2-thiolation of uridine at the wobble position (U34) of tRNA, leading to the formation of s(2)U34. This chain is tRNA-specific 2-thiouridylase MnmA 3, found in Phocaeicola vulgatus (strain ATCC 8482 / DSM 1447 / JCM 5826 / CCUG 4940 / NBRC 14291 / NCTC 11154) (Bacteroides vulgatus).